The primary structure comprises 85 residues: Small ribosomal subunit protein uS17 (85 aa).

The protein belongs to the universal ribosomal protein uS17 family. In terms of assembly, part of the 30S ribosomal subunit.

Its function is as follows. One of the primary rRNA binding proteins, it binds specifically to the 5'-end of 16S ribosomal RNA. This Rhodospirillum centenum (strain ATCC 51521 / SW) protein is Small ribosomal subunit protein uS17.